The chain runs to 251 residues: Squamosa promoter-binding-like protein 4 (251 aa).

Residues 1 to 15 (MDWMPPPKPTSPRSP) show a composition bias toward pro residues. Residues 1 to 64 (MDWMPPPKPT…RAEEGGGGGG (64 aa)) are disordered. Low complexity predominate over residues 24 to 43 (AAVPGSSSGEVSAAAAAAAA). The segment at 65-142 (EVRCQVEGCG…YDHNARRRKP (78 aa)) adopts an SBP-type zinc-finger fold. Positions 68, 73, 90, 93, 109, 112, 116, and 128 each coordinate Zn(2+). The Bipartite nuclear localization signal signature appears at 125–141 (KRSCRRRLYDHNARRRK).

In terms of tissue distribution, expressed in stems, leaf sheaths, and young panicles.

The protein resides in the nucleus. Trans-acting factor that binds specifically to the consensus nucleotide sequence 5'-TNCGTACAA-3'. May be involved in panicle development. This chain is Squamosa promoter-binding-like protein 4 (SPL4), found in Oryza sativa subsp. japonica (Rice).